A 962-amino-acid polypeptide reads, in one-letter code: Glycine dehydrogenase (decarboxylating) (962 aa).

N6-(pyridoxal phosphate)lysine is present on Lys709.

It belongs to the GcvP family. In terms of assembly, the glycine cleavage system is composed of four proteins: P, T, L and H. Pyridoxal 5'-phosphate is required as a cofactor.

The enzyme catalyses N(6)-[(R)-lipoyl]-L-lysyl-[glycine-cleavage complex H protein] + glycine + H(+) = N(6)-[(R)-S(8)-aminomethyldihydrolipoyl]-L-lysyl-[glycine-cleavage complex H protein] + CO2. Its function is as follows. The glycine cleavage system catalyzes the degradation of glycine. The P protein binds the alpha-amino group of glycine through its pyridoxal phosphate cofactor; CO(2) is released and the remaining methylamine moiety is then transferred to the lipoamide cofactor of the H protein. This chain is Glycine dehydrogenase (decarboxylating), found in Shewanella sp. (strain MR-4).